Consider the following 302-residue polypeptide: 4-diphosphocytidyl-2-C-methyl-D-erythritol kinase (302 aa).

Lys-27 is a catalytic residue. 110 to 120 (PMGGGVGGGSS) is an ATP binding site. Residue Asp-152 is part of the active site.

It belongs to the GHMP kinase family. IspE subfamily.

The catalysed reaction is 4-CDP-2-C-methyl-D-erythritol + ATP = 4-CDP-2-C-methyl-D-erythritol 2-phosphate + ADP + H(+). It functions in the pathway isoprenoid biosynthesis; isopentenyl diphosphate biosynthesis via DXP pathway; isopentenyl diphosphate from 1-deoxy-D-xylulose 5-phosphate: step 3/6. Functionally, catalyzes the phosphorylation of the position 2 hydroxy group of 4-diphosphocytidyl-2C-methyl-D-erythritol. This chain is 4-diphosphocytidyl-2-C-methyl-D-erythritol kinase, found in Mannheimia succiniciproducens (strain KCTC 0769BP / MBEL55E).